We begin with the raw amino-acid sequence, 475 residues long: tRNA modification GTPase MnmE (475 aa).

Positions 24, 81, and 124 each coordinate (6S)-5-formyl-5,6,7,8-tetrahydrofolate. Residues 220–397 (GLSVVLAGQP…MRSELLRLIG (178 aa)) form the TrmE-type G domain. Residue Asn230 participates in K(+) binding. GTP contacts are provided by residues 230–235 (NVGKSS), 249–255 (TPIAGTT), 274–277 (DTAG), and 378–380 (SAR). Mg(2+) is bound at residue Ser234. 3 residues coordinate K(+): Thr249, Ile251, and Thr254. Position 255 (Thr255) interacts with Mg(2+). A (6S)-5-formyl-5,6,7,8-tetrahydrofolate-binding site is contributed by Lys475.

This sequence belongs to the TRAFAC class TrmE-Era-EngA-EngB-Septin-like GTPase superfamily. TrmE GTPase family. Homodimer. Heterotetramer of two MnmE and two MnmG subunits. The cofactor is K(+).

It localises to the cytoplasm. Functionally, exhibits a very high intrinsic GTPase hydrolysis rate. Involved in the addition of a carboxymethylaminomethyl (cmnm) group at the wobble position (U34) of certain tRNAs, forming tRNA-cmnm(5)s(2)U34. This is tRNA modification GTPase MnmE from Cupriavidus metallidurans (strain ATCC 43123 / DSM 2839 / NBRC 102507 / CH34) (Ralstonia metallidurans).